The chain runs to 303 residues: Coenzyme PQQ synthesis protein B (303 aa).

It belongs to the PqqB family.

The protein operates within cofactor biosynthesis; pyrroloquinoline quinone biosynthesis. In terms of biological role, may be involved in the transport of PQQ or its precursor to the periplasm. This is Coenzyme PQQ synthesis protein B from Acinetobacter baumannii (strain SDF).